The primary structure comprises 87 residues: Large ribosomal subunit protein eL33 (87 aa).

Belongs to the eukaryotic ribosomal protein eL33 family.

In Pyrococcus woesei, this protein is Large ribosomal subunit protein eL33.